The primary structure comprises 610 residues: Serine/threonine-protein kinase RCK2 (610 aa).

Disordered regions lie at residues 1–55 (MLKI…QDKN) and 99–127 (TSVPAIDVHESSEGQLSSDPLISDESLSE). Basic and acidic residues predominate over residues 11–24 (KKPDQADLSQESKK). Residues 31 to 55 (RSSGTNNKDVSQITSSPKKSFQDKN) are compositionally biased toward polar residues. 2 positions are modified to phosphoserine: Ser46 and Ser50. Residues 163-478 (YKLINKIGEG…IDQFLDDPWL (316 aa)) form the Protein kinase domain. 169 to 177 (IGEGAFSKV) is an ATP binding site. Phosphoserine is present on Ser187. Lys201 provides a ligand contact to ATP. Asp313 (proton acceptor) is an active-site residue. A Phosphothreonine modification is found at Thr350. The tract at residues 493 to 506 (KKAGTSERRHPHKK) is calmodulin-binding. Ser520 is subject to Phosphoserine. The segment at 541 to 564 (EDRMGTRGGLGSLAEDEELEDSYS) is disordered.

Belongs to the protein kinase superfamily. CAMK Ser/Thr protein kinase family. CaMK subfamily. Post-translationally, autophosphorylated. Phosphorylated by HOG1 at Ser-520 after osmotic stress.

It localises to the cytoplasm. It catalyses the reaction L-seryl-[protein] + ATP = O-phospho-L-seryl-[protein] + ADP + H(+). The enzyme catalyses L-threonyl-[protein] + ATP = O-phospho-L-threonyl-[protein] + ADP + H(+). With respect to regulation, activated by Ser-520 phosphorylation by HOG1. Its function is as follows. Serine/threonine-protein kinase involved in a signal transduction pathway that is activated by changes in the osmolarity of the extracellular environment. This Saccharomyces cerevisiae (strain ATCC 204508 / S288c) (Baker's yeast) protein is Serine/threonine-protein kinase RCK2 (RCK2).